Reading from the N-terminus, the 147-residue chain is UPF0306 protein YhbP (147 aa).

The protein belongs to the UPF0306 family.

This is UPF0306 protein YhbP from Shigella sonnei (strain Ss046).